The sequence spans 787 residues: ATP-dependent zinc metalloprotease FtsH (787 aa).

At 1–5 (MNRKN) the chain is on the cytoplasmic side. Residues 6–26 (VIRMVTAIAVVVLLGWSFFYF) form a helical membrane-spanning segment. At 27 to 110 (SDDTRGYKFV…KVTTAVNEGS (84 aa)) the chain is on the extracellular side. A helical membrane pass occupies residues 111-131 (ILGELLVYVLPLLLLVGLFVM). Over 132–787 (FSRMQGGARM…VSPSNPPAHG (656 aa)) the chain is Cytoplasmic. 203-210 (GPPGTGKT) serves as a coordination point for ATP. Residue His-425 participates in Zn(2+) binding. Glu-426 is a catalytic residue. The Zn(2+) site is built by His-429 and Asp-501. Positions 616–787 (DFGGRIPSDK…VSPSNPPAHG (172 aa)) are disordered. Composition is skewed to low complexity over residues 650–671 (AFKA…AAQS) and 700–709 (YGAPPGWHAP). The span at 710-720 (GWPPQQPPDYW) shows a compositional bias: pro residues. The span at 721–732 (YPPEQQPSQSPY) shows a compositional bias: low complexity. Pro residues predominate over residues 733 to 762 (WPQPAPSYPGQAPPPYPSYPPCPSYPPPGQ).

The protein in the central section; belongs to the AAA ATPase family. This sequence in the C-terminal section; belongs to the peptidase M41 family. In terms of assembly, homohexamer. Zn(2+) serves as cofactor.

The protein resides in the cell membrane. In terms of biological role, acts as a processive, ATP-dependent zinc metallopeptidase for both cytoplasmic and membrane proteins. Plays a role in the quality control of integral membrane proteins. The chain is ATP-dependent zinc metalloprotease FtsH from Mycobacterium leprae (strain TN).